Reading from the N-terminus, the 210-residue chain is Probable high-affinity nitrate transporter-activating protein 2.2 (210 aa).

A signal peptide spans 1 to 23 (MARFGAVIHRVFLPLLLLLVVLG). The helical transmembrane segment at 182-202 (IEVAAGVLSAFSVAALAVFLV) threads the bilayer.

Belongs to the NAR2 family.

Its subcellular location is the cell membrane. Its function is as follows. Involved in nitrate transport. The protein is Probable high-affinity nitrate transporter-activating protein 2.2 (NAR2.2) of Oryza sativa subsp. japonica (Rice).